The primary structure comprises 132 residues: uncharacterized protein (132 aa).

Residues 66-86 (LPPMLLVLAALFVKGLIPLVL) traverse the membrane as a helical segment.

The protein resides in the membrane. This is an uncharacterized protein from Saccharomyces cerevisiae (strain ATCC 204508 / S288c) (Baker's yeast).